The sequence spans 280 residues: uncharacterized protein (280 aa).

Disordered regions lie at residues 1–83 (MELK…EEEQ) and 248–280 (IRHREEKDQRDQNQKQKQDDKEQDSYKIEEARL). Positions 12–25 (SAKTDNHTVYQNSP) are enriched in polar residues. 2 stretches are compositionally biased toward basic and acidic residues: residues 41 to 71 (KQTRQEKTTSSKGNTRTESRKFADEEKRVDD) and 249 to 280 (RHREEKDQRDQNQKQKQDDKEQDSYKIEEARL).

This sequence belongs to the chlamydial CPn_0705/CT_671/TC_0042 family.

This is an uncharacterized protein from Chlamydia pneumoniae (Chlamydophila pneumoniae).